A 312-amino-acid chain; its full sequence is MKGPKIAIVGSGAVGTSFLYAAMTRALGSEYMIIDINEKAKVGNVFDLQDASSSCPNFGKVVAGEYSQLKDYDFIFISAGRPQKQGGETRLQLLEGNVEIMKSIAKEIKKSGFNGVTLIASNPVDIMSYTYLKVTGFEPNKVIGSGTLLDSARLRYAIATKYQMSSKDVQAYVIGEHGDSSVSIISSAKIAGLSLKHFSKASDIEKEFGEIDQFIRRRAYEIIERKGATFYGIGEASADVAEQILKDTKEVRVVAPLLTGQYGAKDMMFGTPCVLSRKGIEKILEIELSNTEKVALENSIKVLKDNIKLAKL.

Positions 14, 35, and 66 each coordinate NAD(+). Q83 and R90 together coordinate substrate. NAD(+) contacts are provided by residues S103, A120–N122, and S145. N122 to D125 contacts substrate. Residue D150–R153 coordinates substrate. H177 acts as the Proton acceptor in catalysis. Y220 is subject to Phosphotyrosine. T229 lines the substrate pocket.

This sequence belongs to the LDH/MDH superfamily. LDH family. As to quaternary structure, homotetramer.

Its subcellular location is the cytoplasm. The catalysed reaction is (S)-lactate + NAD(+) = pyruvate + NADH + H(+). Its pathway is fermentation; pyruvate fermentation to lactate; (S)-lactate from pyruvate: step 1/1. Catalyzes the conversion of lactate to pyruvate. The protein is L-lactate dehydrogenase of Mycoplasma genitalium (strain ATCC 33530 / DSM 19775 / NCTC 10195 / G37) (Mycoplasmoides genitalium).